The chain runs to 91 residues: Small ribosomal subunit protein uS19 (91 aa).

The protein belongs to the universal ribosomal protein uS19 family.

Functionally, protein S19 forms a complex with S13 that binds strongly to the 16S ribosomal RNA. In Hahella chejuensis (strain KCTC 2396), this protein is Small ribosomal subunit protein uS19.